Consider the following 143-residue polypeptide: Aspartate 1-decarboxylase (143 aa).

The Schiff-base intermediate with substrate; via pyruvic acid role is filled by S25. The residue at position 25 (S25) is a Pyruvic acid (Ser). Position 57 (T57) interacts with substrate. Y58 (proton donor) is an active-site residue. Substrate is bound at residue 73–75 (GAA).

It belongs to the PanD family. In terms of assembly, heterooctamer of four alpha and four beta subunits. Requires pyruvate as cofactor. In terms of processing, is synthesized initially as an inactive proenzyme, which is activated by self-cleavage at a specific serine bond to produce a beta-subunit with a hydroxyl group at its C-terminus and an alpha-subunit with a pyruvoyl group at its N-terminus.

The protein resides in the cytoplasm. The enzyme catalyses L-aspartate + H(+) = beta-alanine + CO2. It participates in cofactor biosynthesis; (R)-pantothenate biosynthesis; beta-alanine from L-aspartate: step 1/1. Catalyzes the pyruvoyl-dependent decarboxylation of aspartate to produce beta-alanine. This Mycolicibacterium paratuberculosis (strain ATCC BAA-968 / K-10) (Mycobacterium paratuberculosis) protein is Aspartate 1-decarboxylase.